Reading from the N-terminus, the 69-residue chain is Large ribosomal subunit protein bL28 (69 aa).

This sequence belongs to the bacterial ribosomal protein bL28 family.

The polypeptide is Large ribosomal subunit protein bL28 (Nitratidesulfovibrio vulgaris (strain ATCC 29579 / DSM 644 / CCUG 34227 / NCIMB 8303 / VKM B-1760 / Hildenborough) (Desulfovibrio vulgaris)).